Consider the following 429-residue polypeptide: Glutamate-1-semialdehyde 2,1-aminomutase 2 (429 aa).

N6-(pyridoxal phosphate)lysine is present on lysine 268.

The protein belongs to the class-III pyridoxal-phosphate-dependent aminotransferase family. HemL subfamily. As to quaternary structure, homodimer. The cofactor is pyridoxal 5'-phosphate.

It is found in the cytoplasm. It catalyses the reaction (S)-4-amino-5-oxopentanoate = 5-aminolevulinate. Its pathway is porphyrin-containing compound metabolism; protoporphyrin-IX biosynthesis; 5-aminolevulinate from L-glutamyl-tRNA(Glu): step 2/2. The polypeptide is Glutamate-1-semialdehyde 2,1-aminomutase 2 (Bacillus cereus (strain B4264)).